Consider the following 709-residue polypeptide: MEMNQQHNEGNESFVALMNGFAGDGTATLPNDGEQRMSIPARELFAAIEADSGLLPVNSSNTNEKRKRRLQRLTGKQSEVLEGFFSICGHPDDGQKRHLSETTGLGLDQVKFWFQNKRTQVKTMCWKEENYKLSVENEILRDENRRVKIAHCTAVCLTCCNSSVQNQLAVEMERLMGQSEWLQQEIARSNGTPPAANLAFQLNSSADYVFSGQHDQQMIAELAKNAMHALIILAESHVALWFPVPGCSYEVLNKMAYDQAYPGDNSANAIGFKTEATRAVSMVMMDYKSVVDFLMDPYNYRTFFPEVISGAVTNRIYTWPTSDGYNGVIQLMTVEMMFPSPLVPARKCTFLRYCNVLNEGLVVVIDVSLDDGSIFSKCRKMPSGFLIQSIRPNSCKVTAIEHVLADDTGVHELYQPCMNGLVFGARRWVATMARQSARMRDVHHNKTAPQVSTKGRKNLMKLADDLLASFAGGIAATGGGTWTVVIGAGTEKDIRVAYRRTTEGSSSYNAILSVTASLRLPLPMRKTFDLLRNLTHRCKWDVLVHGSVVKEEVTIARGVGNDDTVTVLHCKRAGREDRGRTMILQNNGYDASGSFMVYSQIDSELMNTMVLSPSDLPPGRGGPSLYPTGFSLLPDVEAAQDSSGIALGEVGGTLMTMGFQIPVKLASGDRMYSRSAASAIRLMTDTIALVKKTLMNEHSGIYGVSPFHP.

Positions 66-125 form a DNA-binding region, homeobox; that stretch reads RKRRLQRLTGKQSEVLEGFFSICGHPDDGQKRHLSETTGLGLDQVKFWFQNKRTQVKTMC. Residues 166–187 are a coiled coil; the sequence is NQLAVEMERLMGQSEWLQQEIA. Positions 212–441 constitute an START domain; sequence GQHDQQMIAE…MARQSARMRD (230 aa).

It belongs to the HD-ZIP homeobox family. Class IV subfamily.

The protein resides in the nucleus. In terms of biological role, probable transcription factor. This Oryza sativa subsp. japonica (Rice) protein is Homeobox-leucine zipper protein TF1 (TF1).